The chain runs to 327 residues: MNPSNLEPGLANDSRLLVAAFYAFTPLDDERRETLLSSLPTLARNGSVLGSVLVAHEGVNGTISGPESAVDAVLDHLRTSFDLGDEHYARLEVKRSWAEKPVFRRFKARRKKEIVTIGVASVDPSTSVGTYVEAEHWNALVDDPDTLVIDTRNSYETAIGTFEGAIDPSTESFRDFPQWAESTLRPLIEQKSSKRIAMFCTGGIRCEKASSYLQQQGFGEVHHLRGGILKYLEQVPEAESRWQGECFVFDQRVALNHQLEPGEHSLCHACGLPVSAQQRELPSYIKGVQCLHCVDRFSDADRERFAMRQRQIDQRQIEQHKINRQQG.

The 99-residue stretch at 142 to 240 folds into the Rhodanese domain; sequence DDPDTLVIDT…YLEQVPEAES (99 aa). Cys200 (cysteine persulfide intermediate) is an active-site residue.

This sequence belongs to the TrhO family.

It carries out the reaction uridine(34) in tRNA + AH2 + O2 = 5-hydroxyuridine(34) in tRNA + A + H2O. In terms of biological role, catalyzes oxygen-dependent 5-hydroxyuridine (ho5U) modification at position 34 in tRNAs. The chain is tRNA uridine(34) hydroxylase from Synechococcus sp. (strain CC9605).